The sequence spans 296 residues: Decaprenyl diphosphate synthase (296 aa).

The tract at residues 1 to 24 is disordered; that stretch reads MARDARKRTSSNFPQLPPAPDDYP. The active site involves Asp-76. Position 76 (Asp-76) interacts with Mg(2+). Substrate contacts are provided by residues 76–80, Trp-81, Arg-89, His-93, 121–124, Trp-125, Arg-127, Arg-168, Arg-244, and 250–252; these read DGNGR, STEN, and RSS. Asn-124 (proton acceptor) is an active-site residue. Residue Glu-263 coordinates Mg(2+). 292–294 provides a ligand contact to substrate; that stretch reads RFG.

Belongs to the UPP synthase family. Homodimer. Mg(2+) is required as a cofactor. Requires Mn(2+) as cofactor.

The protein localises to the cell membrane. It carries out the reaction (2Z,6E)-farnesyl diphosphate + 7 isopentenyl diphosphate = (2Z,6Z,10Z,14Z,18Z,22Z,26Z,30Z,34E)-decaprenyl diphosphate + 7 diphosphate. The enzyme catalyses n isopentenyl diphosphate + (2E,6E)-farnesyl diphosphate = a di-trans,poly-cis-polyprenyl diphosphate + n diphosphate. Activated by dithiothreitol and inhibited by EDTA. Catalyzes the sequential condensation of isopentenyl diphosphate (IPP) in the cis configuration with (2Z,6E)-farnesyl diphosphate (Z-FPP or EZ-FPP) generating the 50 carbon product trans,polycis-decaprenyl diphosphate. When (2E,6E)-farnesyl diphosphate (E-FPP or EE-FPP) is used in vitro, both primary products decaprenyl diphosphate and (2E,6E,10E)-geranylgeranyl diphosphate (EEE-GGPP) are synthesized. M.tuberculosis does not synthesize (2E,6E,10Z)-geranylgeranyl diphosphate (EEZ-GGPP) and heptaprenyl diphosphate. Can also accept many different allylic substrates, including E-geranyl diphosphate (E-GPP), neryl diphosphate (NPP), and all-trans-geranyl-geranyl diphosphate. The polypeptide is Decaprenyl diphosphate synthase (uppS) (Mycobacterium tuberculosis (strain ATCC 25618 / H37Rv)).